A 173-amino-acid polypeptide reads, in one-letter code: Ribosome maturation factor RimP (173 aa).

The protein belongs to the RimP family.

It is found in the cytoplasm. Functionally, required for maturation of 30S ribosomal subunits. The protein is Ribosome maturation factor RimP of Pelodictyon phaeoclathratiforme (strain DSM 5477 / BU-1).